A 309-amino-acid chain; its full sequence is 4-hydroxy-3-methylbut-2-enyl diphosphate reductase (309 aa).

Residue C12 coordinates [4Fe-4S] cluster. Residues H41 and H74 each coordinate (2E)-4-hydroxy-3-methylbut-2-enyl diphosphate. Residues H41 and H74 each contribute to the dimethylallyl diphosphate site. The isopentenyl diphosphate site is built by H41 and H74. Residue C96 participates in [4Fe-4S] cluster binding. A (2E)-4-hydroxy-3-methylbut-2-enyl diphosphate-binding site is contributed by H124. H124 provides a ligand contact to dimethylallyl diphosphate. An isopentenyl diphosphate-binding site is contributed by H124. The active-site Proton donor is the E126. T167 contributes to the (2E)-4-hydroxy-3-methylbut-2-enyl diphosphate binding site. A [4Fe-4S] cluster-binding site is contributed by C197. Residues S225, S226, N227, and S269 each contribute to the (2E)-4-hydroxy-3-methylbut-2-enyl diphosphate site. Dimethylallyl diphosphate is bound by residues S225, S226, N227, and S269. Isopentenyl diphosphate contacts are provided by S225, S226, N227, and S269.

It belongs to the IspH family. The cofactor is [4Fe-4S] cluster.

The catalysed reaction is isopentenyl diphosphate + 2 oxidized [2Fe-2S]-[ferredoxin] + H2O = (2E)-4-hydroxy-3-methylbut-2-enyl diphosphate + 2 reduced [2Fe-2S]-[ferredoxin] + 2 H(+). It catalyses the reaction dimethylallyl diphosphate + 2 oxidized [2Fe-2S]-[ferredoxin] + H2O = (2E)-4-hydroxy-3-methylbut-2-enyl diphosphate + 2 reduced [2Fe-2S]-[ferredoxin] + 2 H(+). Its pathway is isoprenoid biosynthesis; dimethylallyl diphosphate biosynthesis; dimethylallyl diphosphate from (2E)-4-hydroxy-3-methylbutenyl diphosphate: step 1/1. It participates in isoprenoid biosynthesis; isopentenyl diphosphate biosynthesis via DXP pathway; isopentenyl diphosphate from 1-deoxy-D-xylulose 5-phosphate: step 6/6. Its function is as follows. Catalyzes the conversion of 1-hydroxy-2-methyl-2-(E)-butenyl 4-diphosphate (HMBPP) into a mixture of isopentenyl diphosphate (IPP) and dimethylallyl diphosphate (DMAPP). Acts in the terminal step of the DOXP/MEP pathway for isoprenoid precursor biosynthesis. The protein is 4-hydroxy-3-methylbut-2-enyl diphosphate reductase of Pseudoalteromonas translucida (strain TAC 125).